The sequence spans 529 residues: AAA ATPase forming ring-shaped complexes (529 aa).

Positions 15–62 (MERQDERLRSLSEANDRLMAKNHALAKALTRATQELTKAKAQLNQLAG) form a coiled coil. An ATP-binding site is contributed by 253–258 (GNGKTL).

Belongs to the AAA ATPase family. As to quaternary structure, homohexamer. Assembles into a hexameric ring structure.

The chain is AAA ATPase forming ring-shaped complexes from Bifidobacterium dentium (strain ATCC 27534 / DSM 20436 / JCM 1195 / Bd1).